The following is a 262-amino-acid chain: Putative 1-acyl-sn-glycerol-3-phosphate acyltransferase acl-1 (262 aa).

The next 3 membrane-spanning stretches (helical) occupy residues 3–23, 29–49, and 89–109; these read FLAI…PVIG, VYFG…SIPF, and IIIA…AWPV. The short motif at 94–99 is the HXXXXD motif element; sequence HQSALD.

The protein belongs to the 1-acyl-sn-glycerol-3-phosphate acyltransferase family.

It localises to the membrane. It catalyses the reaction a 1-acyl-sn-glycero-3-phosphate + an acyl-CoA = a 1,2-diacyl-sn-glycero-3-phosphate + CoA. The protein operates within phospholipid metabolism; CDP-diacylglycerol biosynthesis; CDP-diacylglycerol from sn-glycerol 3-phosphate: step 2/3. In terms of biological role, converts lysophosphatidic acid (LPA) into phosphatidic acid by incorporating an acyl moiety at the sn-2 position of the glycerol backbone. This chain is Putative 1-acyl-sn-glycerol-3-phosphate acyltransferase acl-1 (acl-1), found in Caenorhabditis elegans.